The sequence spans 302 residues: MPIDWFTVIAQGINFLLLLWLLKRFLYHPIIDGLDAREKKIAGILADADTCKSQAENLRTEYESKLAHIEQERTQLVGEAKNEAQMASQSLLDNARHNAEQIVKKRVAALRLEMAELKQDVLQQNIHEVYAISRKVLTELADGDLHTKMIDKLVQRLNTLDDDQHAALTRALANSGNQIVVRSAQPLAEAQKKQLLACLQQYLPSFKKDSSQNNSVNAAPSNPAPSIKLSESIVPRLINGIELTMGGWKLAWSTDNYLAELQEDVEAEFIPFTETLLGLPENEGTDNPEANPPHAEAKIPHA.

Residues 5-22 traverse the membrane as a helical segment; it reads WFTVIAQGINFLLLLWLL. The interval 278–302 is disordered; that stretch reads GLPENEGTDNPEANPPHAEAKIPHA.

It belongs to the ATPase B chain family. F-type ATPases have 2 components, F(1) - the catalytic core - and F(0) - the membrane proton channel. F(1) has five subunits: alpha(3), beta(3), gamma(1), delta(1), epsilon(1). F(0) has three main subunits: a(1), b(2) and c(10-14). The alpha and beta chains form an alternating ring which encloses part of the gamma chain. F(1) is attached to F(0) by a central stalk formed by the gamma and epsilon chains, while a peripheral stalk is formed by the delta and b chains.

It localises to the cell inner membrane. In terms of biological role, f(1)F(0) ATP synthase produces ATP from ADP in the presence of a proton or sodium gradient. F-type ATPases consist of two structural domains, F(1) containing the extramembraneous catalytic core and F(0) containing the membrane proton channel, linked together by a central stalk and a peripheral stalk. During catalysis, ATP synthesis in the catalytic domain of F(1) is coupled via a rotary mechanism of the central stalk subunits to proton translocation. Component of the F(0) channel, it forms part of the peripheral stalk, linking F(1) to F(0). The protein is ATP synthase subunit b 1 of Pseudoalteromonas atlantica (strain T6c / ATCC BAA-1087).